Consider the following 340-residue polypeptide: 3-isopropylmalate dehydrogenase (340 aa).

Substrate is bound by residues R88, R98, R122, and D212. The Mg(2+) site is built by D212, D236, and D240. 272 to 284 (GSAPDIMGKGIAD) is an NAD(+) binding site.

Belongs to the isocitrate and isopropylmalate dehydrogenases family. LeuB type 2 subfamily. Homodimer. Mg(2+) serves as cofactor. Mn(2+) is required as a cofactor.

Its subcellular location is the cytoplasm. The catalysed reaction is (2R,3S)-3-isopropylmalate + NAD(+) = 4-methyl-2-oxopentanoate + CO2 + NADH. It functions in the pathway amino-acid biosynthesis; L-leucine biosynthesis; L-leucine from 3-methyl-2-oxobutanoate: step 3/4. Its function is as follows. Catalyzes the oxidation of 3-carboxy-2-hydroxy-4-methylpentanoate (3-isopropylmalate) to 3-carboxy-4-methyl-2-oxopentanoate. The product decarboxylates to 4-methyl-2 oxopentanoate. The protein is 3-isopropylmalate dehydrogenase of Corynebacterium efficiens (strain DSM 44549 / YS-314 / AJ 12310 / JCM 11189 / NBRC 100395).